The primary structure comprises 385 residues: 8-amino-7-oxononanoate synthase (385 aa).

Residue arginine 21 coordinates substrate. 108-109 (GF) contributes to the pyridoxal 5'-phosphate binding site. Residue histidine 133 coordinates substrate. Pyridoxal 5'-phosphate contacts are provided by serine 179, histidine 207, and threonine 233. Lysine 236 is subject to N6-(pyridoxal phosphate)lysine. Threonine 352 serves as a coordination point for substrate.

This sequence belongs to the class-II pyridoxal-phosphate-dependent aminotransferase family. BioF subfamily. As to quaternary structure, homodimer. Pyridoxal 5'-phosphate serves as cofactor.

It catalyses the reaction 6-carboxyhexanoyl-[ACP] + L-alanine + H(+) = (8S)-8-amino-7-oxononanoate + holo-[ACP] + CO2. It functions in the pathway cofactor biosynthesis; biotin biosynthesis. Catalyzes the decarboxylative condensation of pimeloyl-[acyl-carrier protein] and L-alanine to produce 8-amino-7-oxononanoate (AON), [acyl-carrier protein], and carbon dioxide. The chain is 8-amino-7-oxononanoate synthase from Salmonella enteritidis PT4 (strain P125109).